The sequence spans 179 residues: Ribosome maturation factor RimM (179 aa).

Positions 95 to 174 constitute a PRC barrel domain; the sequence is KDEFFYFDIL…QIFCTQDAFL (80 aa).

The protein belongs to the RimM family. As to quaternary structure, binds ribosomal protein uS19.

Its subcellular location is the cytoplasm. Its function is as follows. An accessory protein needed during the final step in the assembly of 30S ribosomal subunit, possibly for assembly of the head region. Essential for efficient processing of 16S rRNA. May be needed both before and after RbfA during the maturation of 16S rRNA. It has affinity for free ribosomal 30S subunits but not for 70S ribosomes. This is Ribosome maturation factor RimM from Campylobacter jejuni subsp. doylei (strain ATCC BAA-1458 / RM4099 / 269.97).